The primary structure comprises 121 residues: UPF0102 protein BDI_2565 (121 aa).

This sequence belongs to the UPF0102 family.

The sequence is that of UPF0102 protein BDI_2565 from Parabacteroides distasonis (strain ATCC 8503 / DSM 20701 / CIP 104284 / JCM 5825 / NCTC 11152).